The sequence spans 65 residues: Large ribosomal subunit protein bL35 (65 aa).

The segment at N28–A53 is disordered. Over residues K36 to H45 the composition is skewed to basic residues.

This sequence belongs to the bacterial ribosomal protein bL35 family.

In Chlorobium luteolum (strain DSM 273 / BCRC 81028 / 2530) (Pelodictyon luteolum), this protein is Large ribosomal subunit protein bL35.